The sequence spans 225 residues: Urease accessory protein UreG (225 aa).

The disordered stretch occupies residues M1–D21. Residue G33–T40 coordinates GTP.

It belongs to the SIMIBI class G3E GTPase family. UreG subfamily. As to quaternary structure, homodimer. UreD, UreF and UreG form a complex that acts as a GTP-hydrolysis-dependent molecular chaperone, activating the urease apoprotein by helping to assemble the nickel containing metallocenter of UreC. The UreE protein probably delivers the nickel.

The protein resides in the cytoplasm. Facilitates the functional incorporation of the urease nickel metallocenter. This process requires GTP hydrolysis, probably effectuated by UreG. In Streptomyces coelicolor (strain ATCC BAA-471 / A3(2) / M145), this protein is Urease accessory protein UreG.